The following is a 464-amino-acid chain: DNA primase DnaG (464 aa).

Residues 200-274 (DSIIVVEGRA…DVDYVARAPE (75 aa)) enclose the Toprim domain. The Mg(2+) site is built by E206, D248, and D250. Residues 322 to 332 (NGREEKVREVK) show a composition bias toward basic and acidic residues. The disordered stretch occupies residues 322–359 (NGREEKVREVKPPAPAPAPAPAPKPIEKPEPKEREEKI). The segment covering 333–345 (PPAPAPAPAPAPK) has biased composition (pro residues). Basic and acidic residues predominate over residues 346 to 359 (PIEKPEPKEREEKI).

Belongs to the archaeal DnaG primase family. As to quaternary structure, forms a ternary complex with MCM helicase and DNA. Component of the archaeal exosome complex. Mg(2+) serves as cofactor.

It carries out the reaction ssDNA + n NTP = ssDNA/pppN(pN)n-1 hybrid + (n-1) diphosphate.. RNA polymerase that catalyzes the synthesis of short RNA molecules used as primers for DNA polymerase during DNA replication. Also part of the exosome, which is a complex involved in RNA degradation. Acts as a poly(A)-binding protein that enhances the interaction between heteromeric, adenine-rich transcripts and the exosome. This Thermococcus onnurineus (strain NA1) protein is DNA primase DnaG.